The sequence spans 175 residues: ATP-dependent protease subunit HslV (175 aa).

Thr-2 is an active-site residue. Na(+)-binding residues include Ala-156, Cys-159, and Thr-162.

The protein belongs to the peptidase T1B family. HslV subfamily. A double ring-shaped homohexamer of HslV is capped on each side by a ring-shaped HslU homohexamer. The assembly of the HslU/HslV complex is dependent on binding of ATP.

Its subcellular location is the cytoplasm. It carries out the reaction ATP-dependent cleavage of peptide bonds with broad specificity.. Its activity is regulated as follows. Allosterically activated by HslU binding. Protease subunit of a proteasome-like degradation complex believed to be a general protein degrading machinery. In Rhizobium etli (strain ATCC 51251 / DSM 11541 / JCM 21823 / NBRC 15573 / CFN 42), this protein is ATP-dependent protease subunit HslV.